The sequence spans 201 residues: Large ribosomal subunit protein mL61 (201 aa).

The disordered stretch occupies residues 87–118 (RDDKDAKPSSTPFPTSSADGSSPAPKPAQGER). The segment covering 94–106 (PSSTPFPTSSADG) has biased composition (polar residues).

The protein belongs to the mitochondrion-specific ribosomal protein mL61 family. In terms of assembly, component of the mitochondrial large ribosomal subunit (mt-LSU). Mature N.crassa 74S mitochondrial ribosomes consist of a small (37S) and a large (54S) subunit. The 37S small subunit contains a 16S ribosomal RNA (16S mt-rRNA) and 32 different proteins. The 54S large subunit contains a 23S rRNA (23S mt-rRNA) and 42 different proteins.

It localises to the mitochondrion. In terms of biological role, component of the mitochondrial ribosome (mitoribosome), a dedicated translation machinery responsible for the synthesis of mitochondrial genome-encoded proteins, including at least some of the essential transmembrane subunits of the mitochondrial respiratory chain. The mitoribosomes are attached to the mitochondrial inner membrane and translation products are cotranslationally integrated into the membrane. This Neurospora crassa (strain ATCC 24698 / 74-OR23-1A / CBS 708.71 / DSM 1257 / FGSC 987) protein is Large ribosomal subunit protein mL61 (mrp49).